Consider the following 316-residue polypeptide: SWR complex protein 2 (316 aa).

Disordered stretches follow at residues 1–81 (MSAT…GEEV), 93–127 (KRKI…KKKY), and 153–180 (ETRL…TMTQ). Positions 20–31 (KMRELLEKEHLR) are enriched in basic and acidic residues. Residues 20–95 (KMRELLEKEH…RDEERIKKRK (76 aa)) adopt a coiled-coil conformation. Over residues 40-56 (EKEDEEYNIEEEEEAER) the composition is skewed to acidic residues. 2 positions are modified to phosphoserine: S64 and S65. A compositionally biased stretch (basic and acidic residues) spans 70 to 81 (ELKKLEEEGEEV). A compositionally biased stretch (polar residues) spans 167 to 180 (VSASANRQKGTMTQ).

The protein belongs to the VPS72/YL1 family. As to quaternary structure, component of the SWR1 chromatin-remodeling complex.

It localises to the nucleus. Its function is as follows. Participates in the catalytic exchange of histone H2A for the H2A variant pht1, an euchromatin-specific factor, leading to chromatin remodeling and changes in transcription of targeted genes. This is SWR complex protein 2 (swc2) from Schizosaccharomyces pombe (strain 972 / ATCC 24843) (Fission yeast).